The sequence spans 733 residues: Catalase-peroxidase 2 (733 aa).

The interval 1–35 (MAEAETHPPIGESQTEPAESGCPMRIKPPVEGGSN) is disordered. Residues 106–234 (WHAAGTYRVE…PXXPHMGLIY (129 aa)) constitute a cross-link (tryptophyl-tyrosyl-methioninium (Trp-Tyr) (with M-260)). The active-site Proton acceptor is the His107. Residues 234 to 260 (YVNPEGPEGNPDYLAAAIDIRETFGRM) constitute a cross-link (tryptophyl-tyrosyl-methioninium (Tyr-Met) (with W-106)). His275 provides a ligand contact to heme.

Belongs to the peroxidase family. Peroxidase/catalase subfamily. Homodimer or homotetramer. Heme b is required as a cofactor. Formation of the three residue Trp-Tyr-Met cross-link is important for the catalase, but not the peroxidase activity of the enzyme.

The catalysed reaction is H2O2 + AH2 = A + 2 H2O. The enzyme catalyses 2 H2O2 = O2 + 2 H2O. Bifunctional enzyme with both catalase and broad-spectrum peroxidase activity. May play a role in the intracellular survival of mycobacteria. This chain is Catalase-peroxidase 2, found in Mycolicibacterium fortuitum (Mycobacterium fortuitum).